Here is a 609-residue protein sequence, read N- to C-terminus: 1-deoxy-D-xylulose-5-phosphate synthase (609 aa).

Thiamine diphosphate is bound by residues His-77 and 118–120 (GHS). Asp-149 provides a ligand contact to Mg(2+). Residues 150-151 (GA), Asn-178, Tyr-259, and Glu-342 each bind thiamine diphosphate. Asn-178 lines the Mg(2+) pocket.

The protein belongs to the transketolase family. DXPS subfamily. As to quaternary structure, homodimer. It depends on Mg(2+) as a cofactor. Requires thiamine diphosphate as cofactor.

It catalyses the reaction D-glyceraldehyde 3-phosphate + pyruvate + H(+) = 1-deoxy-D-xylulose 5-phosphate + CO2. Its pathway is metabolic intermediate biosynthesis; 1-deoxy-D-xylulose 5-phosphate biosynthesis; 1-deoxy-D-xylulose 5-phosphate from D-glyceraldehyde 3-phosphate and pyruvate: step 1/1. Catalyzes the acyloin condensation reaction between C atoms 2 and 3 of pyruvate and glyceraldehyde 3-phosphate to yield 1-deoxy-D-xylulose-5-phosphate (DXP). In Listeria monocytogenes serotype 4b (strain CLIP80459), this protein is 1-deoxy-D-xylulose-5-phosphate synthase.